A 247-amino-acid chain; its full sequence is MTAIDLNADLGEGCDTDEALLALVSSANIACGWHAGDVNTMRQTVGWALRQGVSIGAHPSFPDRENFGRTEMHLQPDEIYAGVLFQIGGLSAIVRAQGGKLAHVKAHGALYNQASRDRPLAMAIVHAIRDFDPSLVVFGLAGGELVKAARELGLQAKEEVFADRGYNADGSLVKRGTPGALIDSEDAALDQTLTMVREQRVKAIDGTWVPIRAETVCLHGDGAHALAFARRIRERLGSEGIAVRAGA.

This sequence belongs to the LamB/PxpA family. Forms a complex composed of PxpA, PxpB and PxpC.

The catalysed reaction is 5-oxo-L-proline + ATP + 2 H2O = L-glutamate + ADP + phosphate + H(+). Its function is as follows. Catalyzes the cleavage of 5-oxoproline to form L-glutamate coupled to the hydrolysis of ATP to ADP and inorganic phosphate. This Ralstonia pickettii (strain 12J) protein is 5-oxoprolinase subunit A.